Here is a 267-residue protein sequence, read N- to C-terminus: MNRAKTILDIQKMKATGEKITVLTSYDYPFTRIMDECGIDMILVGDSVGVVFAGHDNTLPVTVDDMLYHTRAVTRARPKALVVTDMPFLSYQTDLRDARINAGRLVKEGGAEAVKLEGGAHVTDTIRAIVDMDIPVMAHIGLTPQSIHRMGGYKVQGKKDEQAQRLLEDALAVQEAGAFAVVLEGIPLKLAGRITAELSIPTIGIGAGPHCDGQVLVIHDILGLCEKYSPKFVKRYGDARTLISDAVASYISEVKKGEFPTEGHSFS.

D46 and D85 together coordinate Mg(2+). Residues 46-47 (DS), D85, and K115 contribute to the 3-methyl-2-oxobutanoate site. E117 serves as a coordination point for Mg(2+). E184 (proton acceptor) is an active-site residue.

It belongs to the PanB family. As to quaternary structure, homodecamer; pentamer of dimers. It depends on Mg(2+) as a cofactor.

Its subcellular location is the cytoplasm. It catalyses the reaction 3-methyl-2-oxobutanoate + (6R)-5,10-methylene-5,6,7,8-tetrahydrofolate + H2O = 2-dehydropantoate + (6S)-5,6,7,8-tetrahydrofolate. It participates in cofactor biosynthesis; (R)-pantothenate biosynthesis; (R)-pantoate from 3-methyl-2-oxobutanoate: step 1/2. In terms of biological role, catalyzes the reversible reaction in which hydroxymethyl group from 5,10-methylenetetrahydrofolate is transferred onto alpha-ketoisovalerate to form ketopantoate. This is 3-methyl-2-oxobutanoate hydroxymethyltransferase from Geobacter sulfurreducens (strain ATCC 51573 / DSM 12127 / PCA).